We begin with the raw amino-acid sequence, 654 residues long: Integrator complex subunit 9 (654 aa).

7 residues coordinate 1D-myo-inositol hexakisphosphate: methionine 1, arginine 2, threonine 18, phenylalanine 19, arginine 504, lysine 508, and arginine 509.

It belongs to the metallo-beta-lactamase superfamily. RNA-metabolizing metallo-beta-lactamase-like family. INTS9 subfamily. In terms of assembly, belongs to the multiprotein complex Integrator, at least composed of IntS1, IntS2, IntS3, IntS4, omd/IntS5, IntS6, defl/IntS7, IntS8, IntS9, IntS10, IntS11, IntS12, asun/IntS13, IntS14 and IntS15. The core complex associates with protein phosphatase 2A subunits mts/PP2A and Pp2A-29B, to form the Integrator-PP2A (INTAC) complex. Within the complex, interacts with IntS1 and IntS12. IntS9 is part of the RNA endonuclease subcomplex, composed of IntS4, IntS9, IntS11 and inositol hexakisphosphate (InsP6).

It is found in the nucleus. The protein resides in the cytoplasm. Its subcellular location is the cytosol. Its function is as follows. Component of the integrator complex, a multiprotein complex that terminates RNA polymerase II (Pol II) transcription in the promoter-proximal region of genes. The integrator complex provides a quality checkpoint during transcription elongation by driving premature transcription termination of transcripts that are unfavorably configured for transcriptional elongation: the complex terminates transcription by (1) catalyzing dephosphorylation of the C-terminal domain (CTD) of Pol II subunit Polr2A/Rbp1 and Spt5, and (2) degrading the exiting nascent RNA transcript via endonuclease activity. The integrator complex is also involved in the 3'-end processing of the U7 snRNA, and also the spliceosomal snRNAs U1, U2, U4 and U5. The sequence is that of Integrator complex subunit 9 from Drosophila melanogaster (Fruit fly).